The following is a 270-amino-acid chain: Glutamate racemase (270 aa).

Substrate-binding positions include 10–11 (DS) and 42–43 (YG). Cysteine 74 serves as the catalytic Proton donor/acceptor. Substrate is bound at residue 75-76 (NT). The Proton donor/acceptor role is filled by cysteine 189. Residue 190 to 191 (TH) coordinates substrate.

Belongs to the aspartate/glutamate racemases family.

The catalysed reaction is L-glutamate = D-glutamate. Its pathway is cell wall biogenesis; peptidoglycan biosynthesis. In terms of biological role, provides the (R)-glutamate required for cell wall biosynthesis. This is Glutamate racemase from Bartonella quintana (strain Toulouse) (Rochalimaea quintana).